Consider the following 392-residue polypeptide: Putative RNA-binding protein Luc7-like 2 (392 aa).

Ser18 carries the post-translational modification Phosphoserine. Residues 102–177 (EVAKKRLAET…EAEEVYRNSM (76 aa)) adopt a coiled-coil conformation. A compositionally biased stretch (basic and acidic residues) spans 235–257 (KQEKRNQERLKRREEREREEREK). The tract at residues 235 to 392 (KQEKRNQERL…SSEEREAGEI (158 aa)) is disordered. Over residues 258–321 (LRRSRSHSKN…RSRSHQRSRH (64 aa)) the composition is skewed to basic residues. 5-hydroxylysine; by JMJD6 is present on residues Lys266 and Lys269. Basic and acidic residues-rich tracts occupy residues 337–364 (KERFRDQDLASCDRDRSSRDRSPRDRDR) and 377–392 (RSEDRRSSEEREAGEI).

It belongs to the Luc7 family. Interacts with SCNM1.

The protein localises to the nucleus speckle. It is found in the nucleus. It localises to the nucleoplasm. Its function is as follows. May bind to RNA via its Arg/Ser-rich domain. This is Putative RNA-binding protein Luc7-like 2 (LUC7L2) from Homo sapiens (Human).